A 403-amino-acid chain; its full sequence is Accessory Sec system protein translocase subunit SecY2 (403 aa).

10 consecutive transmembrane segments (helical) span residues 17-37 (MLYTCFILFIYILGTNISIVS), 63-83 (LNIFTLGLGPWLTSMIILMLI), 105-125 (ILTLILSVIQSYFVIHEYVSK), 131-151 (DNIYLTILILVTGTMLLVWLA), 157-177 (YGIAGPMPIVMVSIIKSMMHQ), 186-206 (HIVIALLIILVIITLFILLFI), 240-260 (ITLMMSISAFVFLKSGIHFIL), 276-296 (FDSPVGISVYLVIQMLLGYFL), 339-359 (WFGLALVTVIIGIPLYFTLFV), and 366-386 (IYFSVQLIVLVYISINIAETI).

It belongs to the SecY/SEC61-alpha family. SecY2 subfamily. In terms of assembly, may form heterotrimers with SecE and SecG subunits (Potential). Component of the accessory SecA2/SecY2 protein translocase complex required to export cell wall protein SrpA.

Its subcellular location is the cell membrane. Its function is as follows. The central subunit of a protein translocation channel (Potential). Part of the accessory SecA2/SecY2 system specifically required to export SraP, a serine-rich repeat cell wall protein encoded upstream in the same operon. The sequence is that of Accessory Sec system protein translocase subunit SecY2 from Staphylococcus aureus (strain NCTC 8325 / PS 47).